The chain runs to 190 residues: Cytoglobin (190 aa).

Residues 1–21 are disordered; that stretch reads MEKVPGDMEIERRERSEELSE. A Globin domain is found at 18 to 167; it reads ELSEAERKAV…IYSHVTAAYK (150 aa). An intrachain disulfide couples C38 to C83. The heme b site is built by H81 and H113.

It belongs to the globin family. In terms of assembly, monomeric. Homodimer; disulfide-linked in vitro. Also homooligomeric in vitro. In terms of processing, the formation of an intramolecular disulfide bond between cysteines Cys-38 and Cys-83 specifically enhances the nitrite reductase activity. As to expression, expressed in brain and retina by non-neuronal cells (at protein level). This is the major globin expressed in vascular smooth muscle and is not present in the endothelium (at protein level).

It localises to the cytoplasm. Its subcellular location is the nucleus. The catalysed reaction is Fe(II)-heme b-[protein] + nitric oxide + O2 = Fe(III)-heme b-[protein] + nitrate. It catalyses the reaction 2 superoxide + 2 H(+) = H2O2 + O2. The enzyme catalyses Fe(III)-heme b-[protein] + nitric oxide + H2O = Fe(II)-heme b-[protein] + nitrite + 2 H(+). It carries out the reaction H2O2 + AH2 = A + 2 H2O. With respect to regulation, the nitric oxide dioxygenase activity is activated by a reducing system composed of cytochrome b5, its upstream reductase CYB5R3 and NADH. Its function is as follows. Probable multifunctional globin with a hexacoordinated heme iron required for the catalysis of various reactions depending on redox condition of the cell as well as oxygen availability. Has a nitric oxide dioxygenase (NOD) activity and is most probably involved in cell-mediated and oxygen-dependent nitric oxide consumption. By scavenging this second messenger may regulate several biological processes including endothelium-mediated vasodilation and vascular tone. Under normoxic conditions functions as a nitric oxide dioxygenase (NOD) but under hypoxic conditions the globin may switch its function to that of a nitrite (NO2) reductase (NiR), generating nitric oxide. Could also have peroxidase and superoxide dismutase activities, detoxifying reactive oxygen species and protecting cells against oxidative stress. Also binds dioxygen with low affinity and could function as an oxygen sensor but has probably no function as a respiratory oxygen carrier. This is Cytoglobin from Mus musculus (Mouse).